A 121-amino-acid polypeptide reads, in one-letter code: Large ribosomal subunit protein bL20 (121 aa).

This sequence belongs to the bacterial ribosomal protein bL20 family.

Its function is as follows. Binds directly to 23S ribosomal RNA and is necessary for the in vitro assembly process of the 50S ribosomal subunit. It is not involved in the protein synthesizing functions of that subunit. This is Large ribosomal subunit protein bL20 from Polynucleobacter necessarius subsp. necessarius (strain STIR1).